Here is a 91-residue protein sequence, read N- to C-terminus: Large ribosomal subunit protein uL22 (91 aa).

Belongs to the universal ribosomal protein uL22 family. In terms of assembly, part of the 50S ribosomal subunit.

In terms of biological role, this protein binds specifically to 23S rRNA; its binding is stimulated by other ribosomal proteins, e.g. L4, L17, and L20. It is important during the early stages of 50S assembly. It makes multiple contacts with different domains of the 23S rRNA in the assembled 50S subunit and ribosome. The globular domain of the protein is located near the polypeptide exit tunnel on the outside of the subunit, while an extended beta-hairpin is found that lines the wall of the exit tunnel in the center of the 70S ribosome. The protein is Large ribosomal subunit protein uL22 (rplV) of Pigeon pea witches'-broom phytoplasma.